The primary structure comprises 506 residues: Maturase K (506 aa).

The protein belongs to the intron maturase 2 family. MatK subfamily.

It is found in the plastid. It localises to the chloroplast. Usually encoded in the trnK tRNA gene intron. Probably assists in splicing its own and other chloroplast group II introns. The protein is Maturase K of Trifolium lupinaster (Lupine clover).